The following is a 242-amino-acid chain: Glucosamine-6-phosphate deaminase (242 aa).

Residue aspartate 71 is the Proton acceptor; for enolization step of the active site. Catalysis depends on asparagine 142, which acts as the For ring-opening step. Histidine 144 (proton acceptor; for ring-opening step) is an active-site residue. Glutamate 149 (for ring-opening step) is an active-site residue.

Belongs to the glucosamine/galactosamine-6-phosphate isomerase family. NagB subfamily.

It carries out the reaction alpha-D-glucosamine 6-phosphate + H2O = beta-D-fructose 6-phosphate + NH4(+). Its pathway is amino-sugar metabolism; N-acetylneuraminate degradation; D-fructose 6-phosphate from N-acetylneuraminate: step 5/5. Its function is as follows. Catalyzes the reversible isomerization-deamination of glucosamine 6-phosphate (GlcN6P) to form fructose 6-phosphate (Fru6P) and ammonium ion. The polypeptide is Glucosamine-6-phosphate deaminase (Malacoplasma penetrans (strain HF-2) (Mycoplasma penetrans)).